A 635-amino-acid polypeptide reads, in one-letter code: MAGUK p55 subfamily member 4 (635 aa).

The span at 1 to 16 (MRQSDRGAELTNEDRA) shows a compositional bias: basic and acidic residues. The disordered stretch occupies residues 1–23 (MRQSDRGAELTNEDRALPTPPDP). 2 consecutive L27 domains span residues 23–79 (PENG…EKKL) and 86–136 (AQIL…FEPL). The PDZ domain maps to 153–234 (IVCLVKNQQP…TIMFKVIPVS (82 aa)). In terms of domain architecture, SH3 spans 241–311 (QKMVYVRAMI…PSNHLLKRKQ (71 aa)). Positions 426–615 (HRLIVLVGPS…ACGQLLSAIQ (190 aa)) constitute a Guanylate kinase-like domain. The stretch at 567-622 (VDMKFKDEDLQEMEELAQKMESQFGQFFDHVIVNDNLQDACGQLLSAIQKAQEELQ) forms a coiled coil.

The protein belongs to the MAGUK family. In terms of assembly, may interact with GRIA2. Interacts with MPDZ. Forms a complex with CRB1 and PALS1. Interacts with FASLG. In terms of tissue distribution, detected in the retina (at protein level). Highly enriched in the retina where it is mainly expressed by rod photoreceptors; detected in the inner segment of the photoreceptor layer and in the outer nuclear layer. Also detected at much lower levels in pineal gland, cerebellum, cortex, hippocampus, olfactory bulb, heart, liver and spleen. Expressed in the CA1-CA3 regions of pyramidal cell layers and in the granule cell layer of dentate gyrus in the hippocampus. In the cerebellum, expressed in Purkinje cells and throughout the granule cell layer. In the olfactory bulb, expressed in mitral cells.

It localises to the cytoplasm. Functionally, may play a role in retinal photoreceptors development. In Mus musculus (Mouse), this protein is MAGUK p55 subfamily member 4 (Mpp4).